A 182-amino-acid chain; its full sequence is Ribosome-recycling factor (182 aa).

It belongs to the RRF family.

Its subcellular location is the cytoplasm. Its function is as follows. Responsible for the release of ribosomes from messenger RNA at the termination of protein biosynthesis. May increase the efficiency of translation by recycling ribosomes from one round of translation to another. In Picosynechococcus sp. (strain ATCC 27264 / PCC 7002 / PR-6) (Agmenellum quadruplicatum), this protein is Ribosome-recycling factor.